We begin with the raw amino-acid sequence, 559 residues long: Small ribosomal subunit protein uS3m (559 aa).

Residues 113-134 form a disordered region; sequence EGTEEERNEVRGRGAGKRVESI. The span at 120-134 shows a compositional bias: basic and acidic residues; it reads NEVRGRGAGKRVESI.

It belongs to the universal ribosomal protein uS3 family.

It localises to the mitochondrion. The polypeptide is Small ribosomal subunit protein uS3m (RPS3) (Zea mays (Maize)).